Here is a 626-residue protein sequence, read N- to C-terminus: Hormonally up-regulated neu tumor-associated kinase homolog B (626 aa).

ATP-binding positions include Lys1–Val2 and Lys17. Positions Lys1–Leu246 constitute a Protein kinase domain. Catalysis depends on Asp112, which acts as the Proton acceptor. The segment covering Lys336–Glu357 has biased composition (basic and acidic residues). Disordered regions lie at residues Lys336–Gly407, Val477–Gly574, and Gln590–Ala615. The segment covering Ser374–Lys390 has biased composition (polar residues). The span at Pro392–Ser405 shows a compositional bias: basic and acidic residues. The span at Asp518–Phe532 shows a compositional bias: polar residues. Over residues Ser539–Ser555 the composition is skewed to low complexity. Residues Cys556–Ser566 show a composition bias toward polar residues.

It belongs to the protein kinase superfamily. CAMK Ser/Thr protein kinase family. SNF1 subfamily. In terms of tissue distribution, in the egg, expressed predominantly in the animal hemisphere. This pattern of expression persists throughout the cleavage and blastula stages. At the gastrula stage, expression is restricted to the ectoderm. In later-stage embryos, expressed over the entire embryonic surface including the open neural plate at stage 15 and the neural tube at stage 22. In tadpoles, strongly expressed in the neural tube, motor neurons, brain regions and sensory organs (otic vesicle and eye). Also expressed in the perisomitic mesoderm, brachial arches and embryonic epidermis of tadpoles.

It carries out the reaction L-seryl-[protein] + ATP = O-phospho-L-seryl-[protein] + ADP + H(+). It catalyses the reaction L-threonyl-[protein] + ATP = O-phospho-L-threonyl-[protein] + ADP + H(+). The protein is Hormonally up-regulated neu tumor-associated kinase homolog B (hunk-b) of Xenopus laevis (African clawed frog).